Consider the following 312-residue polypeptide: Acetylglutamate kinase (312 aa).

Substrate is bound by residues G77–G78, R99, and N192.

It belongs to the acetylglutamate kinase family. ArgB subfamily.

The protein localises to the cytoplasm. The enzyme catalyses N-acetyl-L-glutamate + ATP = N-acetyl-L-glutamyl 5-phosphate + ADP. The protein operates within amino-acid biosynthesis; L-arginine biosynthesis; N(2)-acetyl-L-ornithine from L-glutamate: step 2/4. In terms of biological role, catalyzes the ATP-dependent phosphorylation of N-acetyl-L-glutamate. The polypeptide is Acetylglutamate kinase (Synechococcus sp. (strain JA-2-3B'a(2-13)) (Cyanobacteria bacterium Yellowstone B-Prime)).